Reading from the N-terminus, the 355-residue chain is MSQQRGVNGLRFNQDQSCFCCAMETGVRIFNIEPLMEKGHLDQEQVGSVGQVEMLHRCNLLALVGGGSNPKFSDISVLIWDDSRDGKDKLVLEFTFTKPVLSVRLRSDKIVIALKNRIYVYSFPDNPTKLFEFDTRDNPKGLCDLCPSLEKQLLIFPGHKCGSLQLVDLCNAKPGSSSAPFTINAHQSELGCLAINQQGTLVASASRKGTLIRLFDTQTREQLVELRRGTDPATLYCINFSHDSSFLCSSSDKGTVHIFALKDTKLNRRSALARVGKVGPMIGQYVDSQWSLASFTVPAESACICAFGKNTSKNVNSVIAVCVDGTFHKYVFTPEGNCNREAFDVYLDICDDDIF.

2 WD repeats span residues 2 to 40 and 185 to 225; these read SQQRGVNGLRFNQDQSCFCCAMETGVRIFNIEPLMEKGH and AHQS…QLVE. A L/FRRG motif motif is present at residues 226 to 229; the sequence is LRRG. Residues 230–269 form a WD 3 repeat; the sequence is TDPATLYCINFSHDSSFLCSSSDKGTVHIFALKDTKLNRR.

It belongs to the WD repeat PROPPIN family.

Its subcellular location is the preautophagosomal structure. Its function is as follows. Component of the autophagy machinery that controls the major intracellular degradation process by which cytoplasmic materials are packaged into autophagosomes and delivered to lysosomes for degradation. Binds phosphatidylinositol 3-phosphate (PtdIns3P). This Xenopus laevis (African clawed frog) protein is WD repeat domain phosphoinositide-interacting protein 4 (wdr45).